The following is a 144-amino-acid chain: MKTFMAKPQEVERKWYIIDAEGKPLGRLASEVASIIRGKNKPIFTPHVDTGDHVIVLNAEKVLLTGKKLDQKLHRYHTLHPGGLKEIKYRHLMEKHPERAIELAVKGMLPKNSLGRQMYRKLKVYRGAEHNHQAQKPEVLDLNI.

It belongs to the universal ribosomal protein uL13 family. In terms of assembly, part of the 50S ribosomal subunit.

Functionally, this protein is one of the early assembly proteins of the 50S ribosomal subunit, although it is not seen to bind rRNA by itself. It is important during the early stages of 50S assembly. The polypeptide is Large ribosomal subunit protein uL13 (Ruminiclostridium cellulolyticum (strain ATCC 35319 / DSM 5812 / JCM 6584 / H10) (Clostridium cellulolyticum)).